The chain runs to 336 residues: Small ribosomal subunit protein uS9m (336 aa).

The segment at 32–81 (STTTTTTTTTTTTTSDEIPTTKPRFQSRFRRNQQPHQQQRSPYTSSQVTE) is disordered. Residues 33 to 45 (TTTTTTTTTTTTT) are compositionally biased toward low complexity. The span at 65–81 (QPHQQQRSPYTSSQVTE) shows a compositional bias: polar residues.

The protein belongs to the universal ribosomal protein uS9 family. In terms of assembly, component of the mitochondrial small ribosomal subunit (mt-SSU).

The protein resides in the mitochondrion. In terms of biological role, component of the mitochondrial ribosome (mitoribosome), a dedicated translation machinery responsible for the synthesis of mitochondrial genome-encoded proteins, including at least some of the essential transmembrane subunits of the mitochondrial respiratory chain. The mitoribosomes are attached to the mitochondrial inner membrane and translation products are cotranslationally integrated into the membrane. The polypeptide is Small ribosomal subunit protein uS9m (MRPS9) (Candida albicans (strain SC5314 / ATCC MYA-2876) (Yeast)).